The chain runs to 232 residues: Large ribosomal subunit protein uL1 (232 aa).

The protein belongs to the universal ribosomal protein uL1 family. As to quaternary structure, part of the 50S ribosomal subunit.

Its function is as follows. Binds directly to 23S rRNA. The L1 stalk is quite mobile in the ribosome, and is involved in E site tRNA release. Functionally, protein L1 is also a translational repressor protein, it controls the translation of the L11 operon by binding to its mRNA. The chain is Large ribosomal subunit protein uL1 from Porphyromonas gingivalis (strain ATCC 33277 / DSM 20709 / CIP 103683 / JCM 12257 / NCTC 11834 / 2561).